Consider the following 158-residue polypeptide: MKFGCLSFRQPYAGFVLNGIKTVETRWRPLLSSQRNCTIAVHIAHRDWEGDACRELLVERLGMTPAQIQALLRKGEKFGRGVIAGLVDIGETLQCPEDLTPDEVVELENQAALTNLKQKYLTVISNPRWLLEPIPRKGGKDVFQVDIPEHLIPLGHEV.

The region spanning 6–92 (LSFRQPYAGF…IAGLVDIGET (87 aa)) is the ASCH domain.

Belongs to the EOLA family.

This chain is Protein EOLA2, found in Homo sapiens (Human).